A 259-amino-acid polypeptide reads, in one-letter code: Ribosomal RNA small subunit methyltransferase J (259 aa).

S-adenosyl-L-methionine-binding positions include 101-102 (RD), 117-118 (ER), 153-154 (SS), and aspartate 176.

It belongs to the methyltransferase superfamily. RsmJ family.

Its subcellular location is the cytoplasm. It catalyses the reaction guanosine(1516) in 16S rRNA + S-adenosyl-L-methionine = N(2)-methylguanosine(1516) in 16S rRNA + S-adenosyl-L-homocysteine + H(+). Its function is as follows. Specifically methylates the guanosine in position 1516 of 16S rRNA. In Vibrio campbellii (strain ATCC BAA-1116), this protein is Ribosomal RNA small subunit methyltransferase J.